A 935-amino-acid polypeptide reads, in one-letter code: 2-oxoglutarate dehydrogenase E1 component (935 aa).

The protein belongs to the alpha-ketoglutarate dehydrogenase family. As to quaternary structure, homodimer. Part of the 2-oxoglutarate dehydrogenase (OGDH) complex composed of E1 (2-oxoglutarate dehydrogenase), E2 (dihydrolipoamide succinyltransferase) and E3 (dihydrolipoamide dehydrogenase); the complex contains multiple copies of the three enzymatic components (E1, E2 and E3). The cofactor is thiamine diphosphate.

It carries out the reaction N(6)-[(R)-lipoyl]-L-lysyl-[protein] + 2-oxoglutarate + H(+) = N(6)-[(R)-S(8)-succinyldihydrolipoyl]-L-lysyl-[protein] + CO2. E1 component of the 2-oxoglutarate dehydrogenase (OGDH) complex which catalyzes the decarboxylation of 2-oxoglutarate, the first step in the conversion of 2-oxoglutarate to succinyl-CoA and CO(2). This chain is 2-oxoglutarate dehydrogenase E1 component (sucA), found in Haemophilus influenzae (strain ATCC 51907 / DSM 11121 / KW20 / Rd).